A 565-amino-acid polypeptide reads, in one-letter code: Adenine deaminase (565 aa).

This sequence belongs to the metallo-dependent hydrolases superfamily. Adenine deaminase family. It depends on Mn(2+) as a cofactor.

The enzyme catalyses adenine + H2O + H(+) = hypoxanthine + NH4(+). This Lactobacillus delbrueckii subsp. bulgaricus (strain ATCC 11842 / DSM 20081 / BCRC 10696 / JCM 1002 / NBRC 13953 / NCIMB 11778 / NCTC 12712 / WDCM 00102 / Lb 14) protein is Adenine deaminase.